A 218-amino-acid chain; its full sequence is Large ribosomal subunit protein uL3 (218 aa).

At glutamine 153 the chain carries N5-methylglutamine.

Belongs to the universal ribosomal protein uL3 family. As to quaternary structure, part of the 50S ribosomal subunit. Forms a cluster with proteins L14 and L19. In terms of processing, methylated by PrmB.

Its function is as follows. One of the primary rRNA binding proteins, it binds directly near the 3'-end of the 23S rRNA, where it nucleates assembly of the 50S subunit. The protein is Large ribosomal subunit protein uL3 of Alkalilimnicola ehrlichii (strain ATCC BAA-1101 / DSM 17681 / MLHE-1).